The chain runs to 560 residues: Probable sulfate transporter Rv1739c (560 aa).

The interval 1 to 436 is required for sulfate transport in E.coli; that stretch reads MIPTMTSAGW…VLGFVPGIAG (436 aa). A run of 11 helical transmembrane segments spans residues 29–49, 51–71, 79–99, 105–125, 138–158, 184–204, 207–227, 256–276, 333–353, 355–375, and 394–414; these read VLAGLTVAAYLIPQAMAYATV, GLPPAAGLWASIAPLAIYALL, IGPESATALMTAAVLAPMAAG, AVLAATLGLLVGLICLLAGTA, VLVGYMAGIALVMISSQLGTI, WPTFVLAMSVLALLTMLTRWA, APGPIIAVLAATMLVAVMSLD, ALIIPAAGIAIVTFTDGVLTA, LIALGLVVIVMVFASGLLAMF, IAALGALVVYAALRLIDLSEF, and AAVLGLGVFYGVLAAVALSIL. The 116-residue stretch at 442-557 folds into the STAS domain; it reads DYPQAKRVPG…MTLPTAVQAF (116 aa).

Belongs to the SLC26A/SulP transporter (TC 2.A.53) family.

It localises to the cell membrane. Expression in E.coli induces sulfate uptake during early- to mid-log phase growth. Uptake is maximal at pH 6.0, is sulfate-specific, requires E.coli CysA and the transmembrane segment but not the STAS domain of the protein. The protein is Probable sulfate transporter Rv1739c of Mycobacterium tuberculosis (strain ATCC 25618 / H37Rv).